Here is a 126-residue protein sequence, read N- to C-terminus: UPF0538 protein C2orf76 homolog (126 aa).

It belongs to the UPF0538 family.

This is UPF0538 protein C2orf76 homolog from Bos taurus (Bovine).